A 172-amino-acid chain; its full sequence is Putative metal-dependent hydrolase OB0782 (172 aa).

Residues His64, His155, and His159 each contribute to the Zn(2+) site.

Belongs to the metal hydrolase YfiT family. Homodimer. Zn(2+) serves as cofactor.

The protein resides in the cytoplasm. Its function is as follows. Possible metal-dependent hydrolase. The sequence is that of Putative metal-dependent hydrolase OB0782 from Oceanobacillus iheyensis (strain DSM 14371 / CIP 107618 / JCM 11309 / KCTC 3954 / HTE831).